Consider the following 245-residue polypeptide: Putative MSV199 domain-containing protein 146R (245 aa).

Residues 2–97 (RKGYIYVIEN…NTLHGKLKNL (96 aa)) form the GIY-YIG domain.

In Acheta domesticus (House cricket), this protein is Putative MSV199 domain-containing protein 146R.